The chain runs to 507 residues: Transcription factor NIGTH1 (507 aa).

2 disordered regions span residues 139 to 172 and 238 to 268; these read ASAA…TALD and SREA…RKAR. A compositionally biased stretch (basic and acidic residues) spans 152–161; it reads PKEHSEHHPL. An HTH myb-type domain is found at 263 to 323; that stretch reads PHRKARRCWS…HLQKYRLHTR (61 aa). A DNA-binding region (H-T-H motif) is located at residues 294–319; the sequence is PKQIRELMKVDGLTNDEVKSHLQKYR. Residues 402-507 form a disordered region; the sequence is AVAPPPPLPP…TTTSAGAINY (106 aa). Positions 412 to 433 are enriched in low complexity; that stretch reads QQQLAPPYSAKSSASARLGSPD. Over residues 437-446 the composition is skewed to gly residues; it reads RGSGGGGGAA. Over residues 456–476 the composition is skewed to acidic residues; sequence ESIEEEGEGEEREDDDDDDEM.

Interacts with ACA5.

Its subcellular location is the nucleus. Probable transcription factor that may play a role in regulatory networks controlling development and metabolism. In Oryza sativa subsp. japonica (Rice), this protein is Transcription factor NIGTH1.